A 353-amino-acid polypeptide reads, in one-letter code: tRNA-specific 2-thiouridylase MnmA 1 (353 aa).

ATP contacts are provided by residues 9-16 (AMSGGVDS) and methionine 35. The active-site Nucleophile is the cysteine 98. Residues cysteine 98 and cysteine 194 are joined by a disulfide bond. Glycine 122 is an ATP binding site. Residues 144 to 146 (KDQ) form an interaction with tRNA region. The active-site Cysteine persulfide intermediate is cysteine 194. The tract at residues 300–301 (RY) is interaction with tRNA.

It belongs to the MnmA/TRMU family.

Its subcellular location is the cytoplasm. The enzyme catalyses S-sulfanyl-L-cysteinyl-[protein] + uridine(34) in tRNA + AH2 + ATP = 2-thiouridine(34) in tRNA + L-cysteinyl-[protein] + A + AMP + diphosphate + H(+). Catalyzes the 2-thiolation of uridine at the wobble position (U34) of tRNA, leading to the formation of s(2)U34. This chain is tRNA-specific 2-thiouridylase MnmA 1, found in Clostridium botulinum (strain Okra / Type B1).